A 1463-amino-acid chain; its full sequence is Nitric oxide synthase 1 (1463 aa).

Residues 1–200 (MESHMFSVQQ…LQGSGENNKL (200 aa)) are interaction with NOSIP. In terms of domain architecture, PDZ spans 17–99 (SVRLFKRKVG…ETHVVLILRG (83 aa)). 3 disordered regions span residues 110 to 194 (TFTG…LQGS), 215 to 250 (GKAI…LPLG), and 268 to 298 (VVLN…SKCP). The interval 158 to 240 (PDPGQEASSL…VEVQVDRDPD (83 aa)) is DYNLL1/PIN/nNOS-inhibiting protein-binding. A compositionally biased stretch (basic and acidic residues) spans 226-243 (TETKDVEVQVDRDPDSKS). Over residues 280–294 (PSASGKQSPTKNGSP) the composition is skewed to polar residues. S334 contributes to the (6R)-L-erythro-5,6,7,8-tetrahydrobiopterin binding site. C415 is a binding site for heme b. Residues Q478, W587, Y588, and E592 each coordinate L-arginine. Residues V677, W678, and F691 each coordinate (6R)-L-erythro-5,6,7,8-tetrahydrobiopterin. Y706 is a binding site for heme b. A calmodulin-binding region spans residues 725–745 (KRRAIGFKKLAEAVKFSAKLM). The region spanning 755 to 969 (ATILYATETG…AFRTWAKKVF (215 aa)) is the Flavodoxin-like domain. FMN contacts are provided by T761, E762, T763, K765, S766, S807, T808, and G812. S881, S891, and S892 each carry phosphoserine. The FMN site is built by S920, H925, C927, E953, and Q957. The FAD-binding FR-type domain maps to 1024–1271 (KRVSAARLLS…VRGAPSFHLP (248 aa)). R1044 contributes to the NADP(+) binding site. Residues H1066, R1207, Y1208, Y1209, S1210, T1225, and A1227 each coordinate FAD. NADP(+) is bound at residue S1230. The FAD site is built by Y1231, V1244, C1245, and S1246. Residues T1285, R1318, S1347, R1348, K1354, Y1356, Q1358, D1391, T1432, and R1434 each coordinate NADP(+).

It belongs to the NOS family. In terms of assembly, homodimer. Interacts with DLG4; the interaction possibly being prevented by the association between NOS1 and CAPON. Forms a ternary complex with CAPON and RASD1. Forms a ternary complex with CAPON and SYN1. Interacts with ZDHHC23. Interacts with NOSIP; which may impair its synaptic location. Interacts with HTR4. Interacts with SLC6A4. Interacts with VAC14. Interacts (via N-terminal domain) with DLG4 (via N-terminal tandem pair of PDZ domains). Interacts with SLC6A4. Forms a complex with ASL, ASS1 and SLC7A1; the complex regulates cell-autonomous L-arginine synthesis and citrulline recycling while channeling extracellular L-arginine to nitric oxide synthesis pathway. Interacts with DMD; localizes NOS1 to sarcolemma in muscle cells. Interacts with DYNLL1; inhibits the nitric oxide synthase activity. Heme b serves as cofactor. It depends on FAD as a cofactor. FMN is required as a cofactor. Requires (6R)-L-erythro-5,6,7,8-tetrahydrobiopterin as cofactor. Post-translationally, ubiquitinated; mediated by STUB1/CHIP in the presence of Hsp70 and Hsp40 (in vitro).

Its subcellular location is the cell membrane. The protein localises to the sarcolemma. It is found in the cell projection. It localises to the dendritic spine. It catalyses the reaction 2 L-arginine + 3 NADPH + 4 O2 + H(+) = 2 L-citrulline + 2 nitric oxide + 3 NADP(+) + 4 H2O. Its activity is regulated as follows. Stimulated by calcium/calmodulin. Inhibited by DYNLL1 that prevents the dimerization of the protein. Inhibited by NOSIP. In terms of biological role, produces nitric oxide (NO) which is a messenger molecule with diverse functions throughout the body. In the brain and peripheral nervous system, NO displays many properties of a neurotransmitter. Probably has nitrosylase activity and mediates cysteine S-nitrosylation of cytoplasmic target proteins such SRR. The chain is Nitric oxide synthase 1 (NOS1) from Ovis aries (Sheep).